A 279-amino-acid chain; its full sequence is Phosphonates import ATP-binding protein PhnC 2 (279 aa).

The ABC transporter domain occupies 10-253 (LSLKGVSVRY…VARNLYAKQS (244 aa)). 43–50 (GASGAGKS) lines the ATP pocket. Residues 253–262 (SNASNTSAST) show a composition bias toward low complexity. The disordered stretch occupies residues 253–279 (SNASNTSASTDSPRTLQSSQTKELLPC). Over residues 263 to 279 (DSPRTLQSSQTKELLPC) the composition is skewed to polar residues.

The protein belongs to the ABC transporter superfamily. Phosphonates importer (TC 3.A.1.9.1) family. The complex is composed of two ATP-binding proteins (PhnC), two transmembrane proteins (PhnE) and a solute-binding protein (PhnD).

The protein localises to the cell inner membrane. It carries out the reaction phosphonate(out) + ATP + H2O = phosphonate(in) + ADP + phosphate + H(+). Its function is as follows. Part of the ABC transporter complex PhnCDE involved in phosphonates import. Responsible for energy coupling to the transport system. This is Phosphonates import ATP-binding protein PhnC 2 from Cupriavidus metallidurans (strain ATCC 43123 / DSM 2839 / NBRC 102507 / CH34) (Ralstonia metallidurans).